The primary structure comprises 609 residues: Pogo transposable element with KRAB domain (609 aa).

Disordered stretches follow at residues 1–28 and 100–127; these read MEST…ELED and EGEE…SDVK. The stretch at 8–28 forms a coiled coil; the sequence is LNLSLKEEEEEEEIQSRELED. Lys13 participates in a covalent cross-link: Glycyl lysine isopeptide (Lys-Gly) (interchain with G-Cter in SUMO2). Residues 47-118 enclose the KRAB domain; it reads ALFDEVAIYF…DEWQLQGGTS (72 aa). A compositionally biased stretch (polar residues) spans 108–119; it reads SDEWQLQGGTSA. An HTH CENPB-type domain is found at 250 to 323; that stretch reads AFRGPKNGRF…MRRYDLSLRH (74 aa). The DDE-1 domain occupies 353 to 567; that stretch reads HDYEVAQMGN…ISSESIVQGF (215 aa). Residue Lys384 forms a Glycyl lysine isopeptide (Lys-Gly) (interchain with G-Cter in SUMO2) linkage. Positions 588–609 are disordered; that stretch reads SELPGGGEPPKDCDTESMAESN.

It is found in the nucleus. The chain is Pogo transposable element with KRAB domain (POGK) from Homo sapiens (Human).